A 215-amino-acid chain; its full sequence is Putative BTB/POZ domain-containing protein At2g05330 (215 aa).

A BTB domain is found at 17 to 87 (SWQKIGKLTY…LYSDGSMLSS (71 aa)).

It participates in protein modification; protein ubiquitination. In terms of biological role, may act as a substrate-specific adapter of an E3 ubiquitin-protein ligase complex (CUL3-RBX1-BTB) which mediates the ubiquitination and subsequent proteasomal degradation of target proteins. This is Putative BTB/POZ domain-containing protein At2g05330 from Arabidopsis thaliana (Mouse-ear cress).